Here is a 535-residue protein sequence, read N- to C-terminus: MALGAAPAAQLALLALLGTLLPGPGGAGISIHPSKAIIPRGDSLTVNCSNSCDQKSTFGLETVLIKEEVGRGDNWKVFQLRDVQEDIELFCYSNCHKEQTIASMNLTVYWFPEHVELAPLPLWQPVGEELNLSCLVSGGAPRAHLSVVLLRGEEELGRQPVGKGEPAKVMFTVQSRREDHGTNFSCRWELDLRSQGLELFQNTSAPRKLQTYVLPSIDPHLEVPPIVEVGSRWPVNCTLDGLFPASDAKVYLVLGDQKLESNITYDGDSVLAKAWMEENEEGTHSLKCSVTLGEVSRRTQENVTVYSFPLPTLTLSPPEVSEWTTVTVECVTRDGAVVKLNGTSAVPPGPRAQLKLNASASDHRSNFSCSAALEIAGQVVHKHQTLELHVLYGPRLDQRDCPGNWTWQEGSEQTLKCEAQGNPIPKLNCSRKGDGASLPIGDLRPVRREVAGTYLCRATSARGRVTREVVLNVLHGQNILDIVIPVVAVTLILGALGTAGYVYNYQRKIQKYELQKARKAQEEAALKLNAQSTPP.

The first 27 residues, 1-27, serve as a signal peptide directing secretion; that stretch reads MALGAAPAAQLALLALLGTLLPGPGGA. At 28–480 the chain is on the extracellular side; it reads GISIHPSKAI…LNVLHGQNIL (453 aa). The Ig-like C2-type 1 domain occupies 41-102; the sequence is GDSLTVNCSN…SNCHKEQTIA (62 aa). N-linked (GlcNAc...) asparagine glycosylation occurs at Asn-47. Disulfide bonds link Cys-48–Cys-91 and Cys-52–Cys-95. Asn-105 and Asn-131 each carry an N-linked (GlcNAc...) asparagine glycan. The Ig-like C2-type 2 domain occupies 127–193; it reads GEELNLSCLV…FSCRWELDLR (67 aa). The cysteines at positions 134 and 186 are disulfide-linked. Residues 151–153 carry the Cell attachment site; atypical motif; it reads RGE. 10 N-linked (GlcNAc...) asparagine glycosylation sites follow: Asn-183, Asn-202, Asn-236, Asn-262, Asn-302, Asn-341, Asn-357, Asn-366, Asn-404, and Asn-428. The region spanning 230 to 295 is the Ig-like C2-type 3 domain; the sequence is GSRWPVNCTL…LKCSVTLGEV (66 aa). The cysteines at positions 237 and 288 are disulfide-linked. Positions 323–376 constitute an Ig-like C2-type 4 domain; sequence WTTVTVECVTRDGAVVKLNGTSAVPPGPRAQLKLNASASDHRSNFSCSAALEIA. 4 disulfide bridges follow: Cys-330–Cys-369, Cys-401–Cys-417, Cys-417–Cys-456, and Cys-429–Cys-456. One can recognise an Ig-like C2-type 5 domain in the interval 410 to 463; sequence GSEQTLKCEAQGNPIPKLNCSRKGDGASLPIGDLRPVRREVAGTYLCRATSARG. A helical transmembrane segment spans residues 481–503; sequence DIVIPVVAVTLILGALGTAGYVY. Over 504 to 535 the chain is Cytoplasmic; sequence NYQRKIQKYELQKARKAQEEAALKLNAQSTPP. Position 533 is a phosphothreonine (Thr-533).

It belongs to the immunoglobulin superfamily. ICAM family. As to quaternary structure, homodimer. Interacts with MUC1 and promotes cell aggregation in epithelial cells. Interacts with ARHGEF26/SGEF. Interacts (on T cell side) with CD81, CD247 and CD9 at immunological synapses between antigen-presenting cells and T cells. In terms of processing, monoubiquitinated, which is promoted by MARCH9 and leads to endocytosis.

The protein localises to the membrane. ICAM proteins are ligands for the leukocyte adhesion protein LFA-1 (integrin alpha-L/beta-2). During leukocyte trans-endothelial migration, ICAM1 engagement promotes the assembly of endothelial apical cups through ARHGEF26/SGEF and RHOG activation. The sequence is that of Intercellular adhesion molecule 1 (ICAM1) from Bos taurus (Bovine).